The sequence spans 1653 residues: Cortactin-binding protein 2 (1653 aa).

Disordered stretches follow at residues 1–27 (MATDGASCEPDASRAPEEAAGATAEAA), 203–222 (KKKTNELEEELSAEKRRSTE), 268–297 (QLKRGSDSKPSLSLPRKTKDRRSVSISVGT), 314–339 (ESTEHVKKSPLTVPVKPSPGSAKGSV), and 356–609 (HGDL…PSID). Positions 119-276 (RKMQERMSTQ…EQLKRGSDSK (158 aa)) form a coiled coil. The span at 379–389 (GPSTGSPPDLT) shows a compositional bias: polar residues. The span at 390-408 (SSAAQSPAAAPHGLPPAHG) shows a compositional bias: low complexity. Composition is skewed to polar residues over residues 444-470 (GNANDPDQNGNTTQSPPSRDVSPTSRD), 478-490 (ARNTVTQALSRFT), and 573-584 (TVASSPPSSLPQ). Residue arginine 488 is modified to Asymmetric dimethylarginine. ANK repeat units lie at residues 700-730 (GRPTLLQQAAAQGNVTLLSMLLNEEGLDINY), 734-763 (DGHSALYSAAKNGHTDCVRLLLNAEAQVNA), 767-796 (NGFTPLCAAAAQGHFECVELLIAYDAHINH), 800-829 (GGQTPLYLACKNGNKECIKLLLEAGTDRSV), and 833-862 (DGWTPVHAAVDTGNVDSLKLLMYHGAPAHG). Residues 860–892 (AHGNSLNEEEPESDASDLDEGEESSEGKSKPVV) are disordered. Residues 866-883 (NEEEPESDASDLDEGEES) are compositionally biased toward acidic residues. Residues 903–933 (EGWTAAHIAASKGFKNCLEILCRHRGLEPER) form an ANK 6 repeat. The tract at residues 1441-1472 (ESGAWRKVNTSPRRKSGRFSSPTWNKPDLSNE) is disordered. Residue serine 1514 is modified to Phosphoserine. Positions 1545–1653 (DLRTFDSSGN…KNEHIEKLNK (109 aa)) are disordered. Composition is skewed to polar residues over residues 1549-1564 (FDSSGNNPAFSATANN) and 1572-1589 (KEVSPLSSHQTTECSNNK). Over residues 1614-1628 (SQNTKRSSSSSNTRQ) the composition is skewed to low complexity. Residues 1635 to 1653 (SKEENWNLHKNEHIEKLNK) are compositionally biased toward basic and acidic residues.

Interacts with CTTN/cortactin SH3 domain. Interacts with STRN, STRN4/zinedin and MOB4/phocein; this interactions mediate the association with the STRIPAK core complex and may regulate dendritic spine distribution of the STRIPAK complex in hippocampal neurons. Activation of glutamate receptors weakens the interaction with STRN and STRN4.

The protein localises to the cytoplasm. Its subcellular location is the cell cortex. It is found in the cell projection. The protein resides in the dendritic spine. Its function is as follows. Regulates the dendritic spine distribution of CTTN/cortactin in hippocampal neurons, and thus controls dendritic spinogenesis and dendritic spine maintenance. Associates with the striatin-interacting phosphatase and kinase (STRIPAK) core complex to regulate dendritic spine distribution of the STRIPAK complex in hippocampal neurons. In Eulemur macaco macaco (Black lemur), this protein is Cortactin-binding protein 2 (CTTNBP2).